Here is a 713-residue protein sequence, read N- to C-terminus: Methionine--tRNA ligase (713 aa).

The short motif at 17-27 is the 'HIGH' region element; it reads PYANGPIHIGH. C149, C152, C162, and C165 together coordinate Zn(2+). Residues 345-349 carry the 'KMSKS' region motif; sequence KLSTS. Residue T348 participates in ATP binding. Residues 530-564 are disordered; the sequence is VRTSTPDDDPAGAVGWEDAGAPLLPAGHPIPSGPD. The 100-residue stretch at 614–713 folds into the tRNA-binding domain; that stretch reads DFTQLDLRAG…TEAEDGSVVR (100 aa).

The protein belongs to the class-I aminoacyl-tRNA synthetase family. MetG type 1 subfamily. In terms of assembly, homodimer. It depends on Zn(2+) as a cofactor.

The protein localises to the cytoplasm. It catalyses the reaction tRNA(Met) + L-methionine + ATP = L-methionyl-tRNA(Met) + AMP + diphosphate. Its function is as follows. Is required not only for elongation of protein synthesis but also for the initiation of all mRNA translation through initiator tRNA(fMet) aminoacylation. The polypeptide is Methionine--tRNA ligase (Salinibacter ruber (strain DSM 13855 / M31)).